We begin with the raw amino-acid sequence, 190 residues long: MIFLNIISISIRLLLILTLITGILYPIVTTGFAERFFPFRSSGSRVVIQGKIVGSELIAQKFIKDEYFWPRPSAMDYAAGASNASVTNVFLKAKVEERKKFLLEKHSEQTQVPPDLLFASGSGLDPHISPDSALFQINRVAKSRKLTEGQILRLKNIVEESVEKGYIGENRINVLLLNLKLDSEFGIILK.

Residues 13–33 (LLLILTLITGILYPIVTTGFA) form a helical membrane-spanning segment.

It belongs to the KdpC family. In terms of assembly, the system is composed of three essential subunits: KdpA, KdpB and KdpC.

It localises to the cell inner membrane. In terms of biological role, part of the high-affinity ATP-driven potassium transport (or Kdp) system, which catalyzes the hydrolysis of ATP coupled with the electrogenic transport of potassium into the cytoplasm. This subunit acts as a catalytic chaperone that increases the ATP-binding affinity of the ATP-hydrolyzing subunit KdpB by the formation of a transient KdpB/KdpC/ATP ternary complex. The protein is Potassium-transporting ATPase KdpC subunit of Leptospira interrogans serogroup Icterohaemorrhagiae serovar copenhageni (strain Fiocruz L1-130).